The sequence spans 403 residues: MLKLLQQYEYKIIYKRMLYTCFILFIYILGTNISIVSYNDMQVKHESFFKIAISNMGGDVNTLNIFTLGLGPWLTSMIILMLISYRNMDKYMKQTSLEKHYKERILTLILSVIQSYFVIHEYVSKERVHQDNIYLTILILVTGTMLLVWLADKNSRYGIAGPMPIVMVSIIKSMMHQKMEYIDASHIVIALLIILVIITLFILLFIELVEVRIPYIDLMNVSATNMKSYLSWKVNPAGSITLMMSISAFVFLKSGIHFILSMFNKSISDDMPMLTFDSPVGISVYLVIQMLLGYFLSRFLINTKQKSKDFLKSGNYFSGVKPGKDTERYLNYQARRVCWFGLALVTVIIGIPLYFTLFVPHLSTEIYFSVQLIVLVYISINIAETIRTYLYFDKYKPFLNQYW.

The next 10 membrane-spanning stretches (helical) occupy residues 17–37 (MLYT…SIVS), 63–83 (LNIF…LMLI), 105–125 (ILTL…YVSK), 131–151 (DNIY…VWLA), 157–177 (YGIA…MMHQ), 186–206 (HIVI…LLFI), 240–260 (ITLM…HFIL), 276–296 (FDSP…GYFL), 339–359 (WFGL…TLFV), and 366–386 (IYFS…AETI).

Belongs to the SecY/SEC61-alpha family. SecY2 subfamily. As to quaternary structure, may form heterotrimers with SecE and SecG subunits (Potential). Component of the accessory SecA2/SecY2 protein translocase complex required to export cell wall protein SrpA.

Its subcellular location is the cell membrane. The central subunit of a protein translocation channel (Potential). Part of the accessory SecA2/SecY2 system specifically required to export SraP, a serine-rich repeat cell wall protein encoded upstream in the same operon. This is Accessory Sec system protein translocase subunit SecY2 from Staphylococcus aureus (strain NCTC 8325 / PS 47).